The sequence spans 399 residues: Elongation factor Tu (399 aa).

The tr-type G domain maps to 10–209 (KPHVNIGTIG…AVDDYIPTPV (200 aa)). Positions 19 to 26 (GHVDHGKT) are G1. 19 to 26 (GHVDHGKT) is a binding site for GTP. Residue T26 participates in Mg(2+) binding. The tract at residues 62-66 (GITIN) is G2. Residues 83–86 (DCPG) form a G3 region. Residues 83–87 (DCPGH) and 138–141 (NKCD) each bind GTP. Positions 138–141 (NKCD) are G4. The tract at residues 175–177 (SAY) is G5.

Belongs to the TRAFAC class translation factor GTPase superfamily. Classic translation factor GTPase family. EF-Tu/EF-1A subfamily. As to quaternary structure, monomer.

Its subcellular location is the cytoplasm. The catalysed reaction is GTP + H2O = GDP + phosphate + H(+). GTP hydrolase that promotes the GTP-dependent binding of aminoacyl-tRNA to the A-site of ribosomes during protein biosynthesis. The sequence is that of Elongation factor Tu from Bifidobacterium longum subsp. infantis (strain ATCC 15697 / DSM 20088 / JCM 1222 / NCTC 11817 / S12).